The sequence spans 473 residues: Probable DNA N(6)-methyladenine demethylase ALKBH1B (473 aa).

2-oxoglutarate is bound at residue 357–359 (NFY). Positions 368, 391, and 449 each coordinate Fe cation. 461-465 (RLFFR) is a 2-oxoglutarate binding site.

The protein belongs to the alkB family. The cofactor is Fe(2+). Undetectable.

The enzyme catalyses an N(6)-methyl-2'-deoxyadenosine in DNA + 2-oxoglutarate + O2 = a 2'-deoxyadenosine in DNA + formaldehyde + succinate + CO2. Functionally, dioxygenase that may catalyzes DNA N(6)-methyladenine (6 mA) demethylation. Requires molecular oxygen, alpha-ketoglutarate and iron. This Arabidopsis thaliana (Mouse-ear cress) protein is Probable DNA N(6)-methyladenine demethylase ALKBH1B.